The following is a 96-amino-acid chain: Co-chaperonin GroES (96 aa).

This sequence belongs to the GroES chaperonin family. In terms of assembly, heptamer of 7 subunits arranged in a ring. Interacts with the chaperonin GroEL.

Its subcellular location is the cytoplasm. Functionally, together with the chaperonin GroEL, plays an essential role in assisting protein folding. The GroEL-GroES system forms a nano-cage that allows encapsulation of the non-native substrate proteins and provides a physical environment optimized to promote and accelerate protein folding. GroES binds to the apical surface of the GroEL ring, thereby capping the opening of the GroEL channel. This is Co-chaperonin GroES from Legionella micdadei (Tatlockia micdadei).